A 590-amino-acid polypeptide reads, in one-letter code: Arginine--tRNA ligase (590 aa).

A 'HIGH' region motif is present at residues 134-144 (ANPTGPMHVGH).

Belongs to the class-I aminoacyl-tRNA synthetase family. As to quaternary structure, monomer.

It is found in the cytoplasm. The catalysed reaction is tRNA(Arg) + L-arginine + ATP = L-arginyl-tRNA(Arg) + AMP + diphosphate. This Beijerinckia indica subsp. indica (strain ATCC 9039 / DSM 1715 / NCIMB 8712) protein is Arginine--tRNA ligase.